Here is a 139-residue protein sequence, read N- to C-terminus: Growth factor (139 aa).

The first 19 residues, 1–19 (MSMKYLMLLFATMIIRSFA), serve as a signal peptide directing secretion. The N-linked (GlcNAc...) asparagine; by host glycan is linked to asparagine 34. Positions 41-81 (AIRLCGPEGDGYCLHGDCIHARDINGMYCRCSHGYTGIRCQ) constitute an EGF-like domain. Cystine bridges form between cysteine 45–cysteine 58, cysteine 53–cysteine 69, and cysteine 71–cysteine 80. Asparagine 95 carries an N-linked (GlcNAc...) asparagine; by host glycan.

The protein belongs to the orthopoxvirus OPG019 family.

Its subcellular location is the secreted. Stimulates cellular proliferation (hyperplasia)and mobility around infected cells to promote rapid and efficient spread of infection. The chain is Growth factor (OPG019) from Camelus.